We begin with the raw amino-acid sequence, 513 residues long: 2-isopropylmalate synthase (513 aa).

Positions 4-266 (IEFFDTSLRD…QSPLKLSETA (263 aa)) constitute a Pyruvate carboxyltransferase domain. Residues Asp-13, His-201, His-203, and Asn-237 each coordinate Mn(2+). Residues 390 to 513 (ILDNVQIDGH…VEQISAHDGI (124 aa)) are regulatory domain.

This sequence belongs to the alpha-IPM synthase/homocitrate synthase family. LeuA type 1 subfamily. In terms of assembly, homodimer. It depends on Mn(2+) as a cofactor.

The protein localises to the cytoplasm. It catalyses the reaction 3-methyl-2-oxobutanoate + acetyl-CoA + H2O = (2S)-2-isopropylmalate + CoA + H(+). It participates in amino-acid biosynthesis; L-leucine biosynthesis; L-leucine from 3-methyl-2-oxobutanoate: step 1/4. Its function is as follows. Catalyzes the condensation of the acetyl group of acetyl-CoA with 3-methyl-2-oxobutanoate (2-ketoisovalerate) to form 3-carboxy-3-hydroxy-4-methylpentanoate (2-isopropylmalate). In Lactococcus lactis subsp. lactis (strain IL1403) (Streptococcus lactis), this protein is 2-isopropylmalate synthase.